Consider the following 145-residue polypeptide: Large ribosomal subunit protein uL11 (145 aa).

It belongs to the universal ribosomal protein uL11 family. Part of the ribosomal stalk of the 50S ribosomal subunit. Interacts with L10 and the large rRNA to form the base of the stalk. L10 forms an elongated spine to which L12 dimers bind in a sequential fashion forming a multimeric L10(L12)X complex. Post-translationally, one or more lysine residues are methylated.

Its function is as follows. Forms part of the ribosomal stalk which helps the ribosome interact with GTP-bound translation factors. This chain is Large ribosomal subunit protein uL11, found in Rickettsia canadensis (strain McKiel).